The primary structure comprises 1315 residues: ESX secretion system protein EccC (1315 aa).

The segment covering 1–11 (MSTVLVRRKER) has biased composition (basic residues). The segment at 1 to 21 (MSTVLVRRKERRQPPQMPRGE) is disordered. Topologically, residues 1 to 40 (MSTVLVRRKERRQPPQMPRGEILLESPPELPEVVTNSFQN) are cytoplasmic. Residues 41–61 (VLMYLPMAAGSAAMVFTFLNH) traverse the membrane as a helical segment. The Extracellular segment spans residues 62–64 (RNT). The helical transmembrane segment at 65–85 (LQLVAGGMFALSMFGMMFGQL) threads the bilayer. Residues 86 to 1315 (SQQSGERKTK…RLIQTAYRES (1230 aa)) are Cytoplasmic-facing. FtsK domains lie at 456–656 (GRPL…MESR) and 813–1004 (RDPY…YESE). Residue 479–486 (GATGSGKS) coordinates ATP. Glu-593 is an active-site residue. The interval 721–1315 (RPQVVEQPQP…RLIQTAYRES (595 aa)) is binds EsxB. ATP contacts are provided by residues 834–839 (QTGKST), Thr-1031, 1119–1124 (ECGKSN), Gln-1293, and 1310–1311 (TA). In terms of domain architecture, FtsK 3 spans 1099-1282 (LSPVYLDFNT…MSGNKDEGIL (184 aa)).

The cytosolic domain can form homodimers. Binds EsxB, which leads to multimerization, however EsxA disassembles the multimers, possibly by making EccC-EsxA-EsxB trimers instead of EccC-EsxB-EsxB-EccC tetramers. Forms a complex with EsxA and EsxB, probably wholly mediated by EsxB.

It localises to the cell membrane. EsxB binding to the third FtsK domain causes multimerization; a subsequent unknown step relieves the allosteric inhibition of linker 2 on FtsK domain 1, activating the ATPase activity; a mutant EsxB ('Ala-98') does not cause multimers to form. In terms of biological role, part of the ESX specialized secretion system, which exports proteins from the cell including EsxA (ESAT-6) and EsxB (CFP-10). Has weak intrinsic ATPase activity; probably only the first FtsK domain can hydrolyze ATP. Might be the translocase subunit. The protein is ESX secretion system protein EccC of Thermomonospora curvata (strain ATCC 19995 / DSM 43183 / JCM 3096 / KCTC 9072 / NBRC 15933 / NCIMB 10081 / Henssen B9).